The primary structure comprises 79 residues: Acyl carrier protein (79 aa).

The Carrier domain occupies 2–77 (ENIEQRVKKI…QAIDYVNAHL (76 aa)). Ser37 carries the O-(pantetheine 4'-phosphoryl)serine modification.

Belongs to the acyl carrier protein (ACP) family. 4'-phosphopantetheine is transferred from CoA to a specific serine of apo-ACP by AcpS. This modification is essential for activity because fatty acids are bound in thioester linkage to the sulfhydryl of the prosthetic group.

Its subcellular location is the cytoplasm. The protein operates within lipid metabolism; fatty acid biosynthesis. Functionally, carrier of the growing fatty acid chain in fatty acid biosynthesis. In Azoarcus sp. (strain BH72), this protein is Acyl carrier protein.